A 320-amino-acid chain; its full sequence is MSMITERPVSDPAGQSVSATGDGAVGSRRDMRAVVAAYVALTKPRIVELLLVTTVPAMMLAHGGLPSLWLMAVVLVGGSLAAGAASVLNCYIDRDIDQVMRRTKRRPLPAHTVAPRNALIFGLVLATVSVTLLAVFTNALAAGLTLAAILYYDLVYTAWLKRTTTANTFWGGACGAAPVLIGWAAVTGSLAPAAWALFGVVFFWQMPHFYPLAMKYKDDYARAGIPMLPVVASTRRVNAEILVFAWLTVLVSLVTWPLGAGMGPIYGLPTLVVGVIFLVEAHRLCRRAARGEAVKPMRLFHWSTTYLTVVFAAVALDALI.

The segment at 1-24 (MSMITERPVSDPAGQSVSATGDGA) is disordered. 8 consecutive transmembrane segments (helical) span residues 33–55 (AVVAAYVALTKPRIVELLLVTTV), 68–88 (LWLMAVVLVGGSLAAGAASVL), 117–137 (NALIFGLVLATVSVTLLAVFT), 140–160 (LAAGLTLAAILYYDLVYTAWL), 183–203 (WAAVTGSLAPAAWALFGVVFF), 241–261 (ILVFAWLTVLVSLVTWPLGAG), 262–282 (MGPIYGLPTLVVGVIFLVEAH), and 300–320 (FHWSTTYLTVVFAAVALDALI).

The protein belongs to the UbiA prenyltransferase family. Protoheme IX farnesyltransferase subfamily.

It is found in the cell membrane. It catalyses the reaction heme b + (2E,6E)-farnesyl diphosphate + H2O = Fe(II)-heme o + diphosphate. It functions in the pathway porphyrin-containing compound metabolism; heme O biosynthesis; heme O from protoheme: step 1/1. In terms of biological role, converts heme B (protoheme IX) to heme O by substitution of the vinyl group on carbon 2 of heme B porphyrin ring with a hydroxyethyl farnesyl side group. The chain is Protoheme IX farnesyltransferase from Salinispora tropica (strain ATCC BAA-916 / DSM 44818 / JCM 13857 / NBRC 105044 / CNB-440).